The primary structure comprises 689 residues: Glycine--tRNA ligase beta subunit (689 aa).

It belongs to the class-II aminoacyl-tRNA synthetase family. Tetramer of two alpha and two beta subunits.

It is found in the cytoplasm. It catalyses the reaction tRNA(Gly) + glycine + ATP = glycyl-tRNA(Gly) + AMP + diphosphate. The chain is Glycine--tRNA ligase beta subunit from Escherichia coli O7:K1 (strain IAI39 / ExPEC).